The sequence spans 378 residues: Galanin receptor 2b (378 aa).

Residues 1–30 (MSDHEDLNKAMGHWNASESYQLNPASVIVS) are Extracellular-facing. A helical membrane pass occupies residues 31 to 51 (VVFSLIFLLGTIGNSLVLAVL). Over 52 to 62 (LRSGQVGYNTT) the chain is Cytoplasmic. The helical transmembrane segment at 63-83 (NLFILNLSVADFFFIIFCVPF) threads the bilayer. The Extracellular segment spans residues 84–101 (QATIYSLEGWVFGSFMCK). An intrachain disulfide couples cysteine 100 to cysteine 177. The helical transmembrane segment at 102–123 (VVHFFINLTMYASSFTLAAVSV) threads the bilayer. The Cytoplasmic segment spans residues 124–143 (DRYLAIRYPLRSRELRTPCN). A helical membrane pass occupies residues 144 to 164 (AVVAMVVIWGLSLVFAGPYLS). At 165-187 (YYDLIDFENSNVCVPGWEEHNRK) the chain is on the extracellular side. Residues 188–208 (VLDTCTFVFGYVIPVLIVSLS) traverse the membrane as a helical segment. The Cytoplasmic segment spans residues 209–238 (YTRTIKYLWTAVDPLDGMSESKRAKRKVTK). A helical membrane pass occupies residues 239–259 (MIIIVTVLFCICWLPYHVVIL). The Extracellular portion of the chain corresponds to 260–276 (CYLYGDFPFNQTTYAFR). Residues 277–297 (LLSHCMAYANSCLNPIVYALV) form a helical membrane-spanning segment. Over 298-378 (SKHFRKGFKK…TITLPFQNQP (81 aa)) the chain is Cytoplasmic. Positions 339–362 (EVSQMNEENARQNESEMVNRPLAQ) are disordered.

Belongs to the G-protein coupled receptor 1 family. In terms of tissue distribution, expressed in neurons in the ventral area of the interpeduncular nucleus (IPN) where expression often overlaps with spx1.

It is found in the membrane. Functionally, receptor for the hormone galanin. Receptor for the hormones spexin-1 and spexin-2. This Danio rerio (Zebrafish) protein is Galanin receptor 2b.